We begin with the raw amino-acid sequence, 212 residues long: Imidazole glycerol phosphate synthase subunit HisH (212 aa).

The Glutamine amidotransferase type-1 domain maps to 3 to 208 (RIVIVDYGMG…GRMVCDLIST (206 aa)). Cysteine 81 functions as the Nucleophile in the catalytic mechanism. Residues histidine 183 and glutamate 185 contribute to the active site.

Heterodimer of HisH and HisF.

It localises to the cytoplasm. It catalyses the reaction 5-[(5-phospho-1-deoxy-D-ribulos-1-ylimino)methylamino]-1-(5-phospho-beta-D-ribosyl)imidazole-4-carboxamide + L-glutamine = D-erythro-1-(imidazol-4-yl)glycerol 3-phosphate + 5-amino-1-(5-phospho-beta-D-ribosyl)imidazole-4-carboxamide + L-glutamate + H(+). It carries out the reaction L-glutamine + H2O = L-glutamate + NH4(+). Its pathway is amino-acid biosynthesis; L-histidine biosynthesis; L-histidine from 5-phospho-alpha-D-ribose 1-diphosphate: step 5/9. Functionally, IGPS catalyzes the conversion of PRFAR and glutamine to IGP, AICAR and glutamate. The HisH subunit catalyzes the hydrolysis of glutamine to glutamate and ammonia as part of the synthesis of IGP and AICAR. The resulting ammonia molecule is channeled to the active site of HisF. The polypeptide is Imidazole glycerol phosphate synthase subunit HisH (Symbiobacterium thermophilum (strain DSM 24528 / JCM 14929 / IAM 14863 / T)).